Reading from the N-terminus, the 428-residue chain is 3-phosphoshikimate 1-carboxyvinyltransferase (428 aa).

Residues Lys22, Ser23, and Arg27 each contribute to the 3-phosphoshikimate site. Lys22 lines the phosphoenolpyruvate pocket. Residues Gly95 and Arg123 each coordinate phosphoenolpyruvate. 3-phosphoshikimate-binding residues include Ser170, Ser171, Gln172, Ser197, Asp316, and Lys343. Gln172 provides a ligand contact to phosphoenolpyruvate. Asp316 functions as the Proton acceptor in the catalytic mechanism. The phosphoenolpyruvate site is built by Arg347, Arg390, and Lys414.

The protein belongs to the EPSP synthase family. As to quaternary structure, monomer.

Its subcellular location is the cytoplasm. It carries out the reaction 3-phosphoshikimate + phosphoenolpyruvate = 5-O-(1-carboxyvinyl)-3-phosphoshikimate + phosphate. It participates in metabolic intermediate biosynthesis; chorismate biosynthesis; chorismate from D-erythrose 4-phosphate and phosphoenolpyruvate: step 6/7. Its function is as follows. Catalyzes the transfer of the enolpyruvyl moiety of phosphoenolpyruvate (PEP) to the 5-hydroxyl of shikimate-3-phosphate (S3P) to produce enolpyruvyl shikimate-3-phosphate and inorganic phosphate. The chain is 3-phosphoshikimate 1-carboxyvinyltransferase from Laribacter hongkongensis (strain HLHK9).